Here is a 158-residue protein sequence, read N- to C-terminus: Deoxyuridine 5'-triphosphate nucleotidohydrolase (158 aa).

Substrate-binding positions include 75–77 (RSG), Asn-88, 92–94 (TVD), and Lys-102.

This sequence belongs to the dUTPase family. Mg(2+) is required as a cofactor.

It catalyses the reaction dUTP + H2O = dUMP + diphosphate + H(+). The protein operates within pyrimidine metabolism; dUMP biosynthesis; dUMP from dCTP (dUTP route): step 2/2. This enzyme is involved in nucleotide metabolism: it produces dUMP, the immediate precursor of thymidine nucleotides and it decreases the intracellular concentration of dUTP so that uracil cannot be incorporated into DNA. This Bifidobacterium longum (strain DJO10A) protein is Deoxyuridine 5'-triphosphate nucleotidohydrolase.